The primary structure comprises 785 residues: SUN domain-containing protein 1 (785 aa).

The tract at residues 1–138 is LMNA-binding; sequence MDFSRLHMYS…TRRPPVLDES (138 aa). Residues 1 to 288 lie on the Nuclear side of the membrane; sequence MDFSRLHMYS…VFLLTRCLRN (288 aa). A phosphoserine mark is found at S48, S100, and S138. A Glycyl lysine isopeptide (Lys-Gly) (interchain with G-Cter in SUMO2) cross-link involves residue K195. The interval 209–309 is SYNE2-binding; it reads SRVYSRDRNQ…FLLLAGLSLR (101 aa). The EMD-binding stretch occupies residues 223-309; sequence LLQILRRIGA…FLLLAGLSLR (87 aa). Residues 289-308 traverse the membrane as a helical segment; it reads ICKFLVLLIPLFLLLAGLSL. Residues 309 to 785 lie on the Perinuclear space side of the membrane; the sequence is RGQGNFFSFL…RFRVHGEPVK (477 aa). Phosphoserine occurs at positions 333 and 344. Positions 428–495 form a coiled coil; sequence HQEHEVRMSH…KSELSSWRHV (68 aa). A sufficient for interaction with SYNE1 and SYNE2 region spans residues 574–785; it reads TSEAVVSAVS…RFRVHGEPVK (212 aa). The region spanning 622–784 is the SUN domain; it reads GGSILSTRCS…YRFRVHGEPV (163 aa).

In terms of assembly, core component of the LINC complex which is composed of inner nuclear membrane SUN domain-containing proteins coupled to outer nuclear membrane KASH domain-containing nesprins. SUN and KASH domain-containing proteins seem to bind each other promiscuously; however, differentially expression of LINC complex constituents is giving rise to specific assemblies. At least SUN1/2-containing core LINC complexes are proposed to be hexameric composed of three protomers of each KASH and SUN domain-containing protein. Interacts with KASH5 (via the last 22 amino acids); this interaction mediates KASH5 telomere localization by forming a SUN1:KASH5 LINC complex. May interact with SYNE3. Interacts with SYNE2 and SYNE1; probably forming respective LINC complexes. Interacts with A-type lamin with a strong preference for unprocessed A-type lamin compared with the mature protein. Interaction with lamins B1 and C is hardly detectable. Interacts with NAT10. Interacts with EMD and TSNAX. Associates with the nuclear pore complex (NPC). Interacts with CCDC79/TERB1; promoting the accumulation of the LINC complex complexes at the telomere-nuclear envelope attachment sites. Interacts (via KASH domain) with TMEM258. In terms of processing, the disulfide bond with KASH domain-containing nesprins is required for stability of the respective LINC complexes under tensile forces.

Its subcellular location is the nucleus inner membrane. As a component of the LINC (LInker of Nucleoskeleton and Cytoskeleton) complex involved in the connection between the nuclear lamina and the cytoskeleton. The nucleocytoplasmic interactions established by the LINC complex play an important role in the transmission of mechanical forces across the nuclear envelope and in nuclear movement and positioning. Required for interkinetic nuclear migration (INM) and essential for nucleokinesis and centrosome-nucleus coupling during radial neuronal migration in the cerebral cortex and during glial migration. Involved in telomere attachment to nuclear envelope in the prophase of meiosis implicating a SUN1/2:KASH5 LINC complex in which SUN1 and SUN2 seem to act at least partial redundantly. Required for gametogenesis and involved in selective gene expression of coding and non-coding RNAs needed for gametogenesis. Helps to define the distribution of nuclear pore complexes (NPCs). Required for efficient localization of SYNE4 in the nuclear envelope. May be involved in nuclear remodeling during sperm head formation in spermatogenesis. May play a role in DNA repair by suppressing non-homologous end joining repair to facilitate the repair of DNA cross-links. This chain is SUN domain-containing protein 1, found in Homo sapiens (Human).